Reading from the N-terminus, the 259-residue chain is MSKYKLIMLRHGEGAWNKENRFCSWVDQKLNSDGLQEARNCGKQLKALNFEFDLVFTSILNRSIHTAWLILEELGQEWVPVESSWRLNERHYGALISLNREQMALNHGEEQVRLWRRSYNVTPPPIEESHPYYHEIYNDRKYKVCDVPLDQLPRSESLKDVLERLLPYWNERIAPEVLRGKTVLISAQGNSCRALLKYLEGISDEEIINITLPTGVPILLELDENLRTVGPHQFLGDQEAIQAAIKKVDDQGKVKRADK.

Ser2 bears the N-acetylserine mark. Substrate is bound by residues 10 to 17 (RHGEGAWN), 23 to 24 (CS), Arg62, 89 to 92 (ERHY), Arg100, and 116 to 117 (RR). The active-site Tele-phosphohistidine intermediate is His11. The Proton donor/acceptor role is filled by Glu89. Thr122 carries the post-translational modification Phosphothreonine. 189-190 (GN) is a binding site for substrate.

Belongs to the phosphoglycerate mutase family. BPG-dependent PGAM subfamily. As to quaternary structure, homodimer.

The enzyme catalyses (2R)-3-phospho-glyceroyl phosphate = (2R)-2,3-bisphosphoglycerate + H(+). The catalysed reaction is (2R)-2-phosphoglycerate = (2R)-3-phosphoglycerate. At alkaline pH BPGM favors the synthase reaction; however, at lower pH the phosphatase reaction is dominant. Inhibited by citrate. Plays a major role in regulating hemoglobin oxygen affinity by controlling the levels of its allosteric effector 2,3-bisphosphoglycerate (2,3-BPG). Also exhibits mutase (EC 5.4.2.11) activity. In Bos taurus (Bovine), this protein is Bisphosphoglycerate mutase (BPGM).